Reading from the N-terminus, the 602-residue chain is Zinc finger MYND domain-containing protein 11 (602 aa).

The region spanning 6 to 82 (KRRQADTKAI…CKGSKAGIEQ (77 aa)) is the SAMD1-like winged helix (WH) domain. The PHD-type zinc finger occupies 100 to 148 (DWYCFECHLPGEVLICDLCFRVYHSKCLSDEFRLRDSSSPWQCPVCRSI). The region spanning 149–255 (KKKNTNKQEM…KDTCHELDEL (107 aa)) is the Bromo domain. Residues cysteine 258, cysteine 261, cysteine 277, and histidine 281 each coordinate Zn(2+). Residues 280 to 331 (NHELVWAKMKGFGFWPAKVMQKEDNQVDVRFFGHHHQRAWIPSENIQDITVN) enclose the PWWP domain. A Glycyl lysine isopeptide (Lys-Gly) (interchain with G-Cter in SUMO2) cross-link involves residue lysine 366. The interval 366 to 459 (KNEDRGEEEA…MLHRSTQTTN (94 aa)) is disordered. A Nuclear localization signal motif is present at residues 394-400 (RAKKGRR). Glycyl lysine isopeptide (Lys-Gly) (interchain with G-Cter in SUMO2) cross-links involve residues lysine 407 and lysine 408. Serine 421 bears the Phosphoserine mark. Positions 435–459 (SVSTQTKKLSASSPRMLHRSTQTTN) are enriched in polar residues. Residues 452 to 572 (HRSTQTTNDG…CYNCEEEAMY (121 aa)) form an interaction with human adenovirus E1A region. 8 residues coordinate Zn(2+): cysteine 563, cysteine 566, cysteine 574, cysteine 575, cysteine 581, cysteine 585, histidine 594, and cysteine 598. The MYND-type zinc-finger motif lies at 563 to 598 (CYNCEEEAMYHCCWNTSYCSIKCQQEHWHAEHKRTC).

In terms of assembly, homooligomer; forms homooligomers via its C-terminus. Interacts with histone H3.3 trimethylated at 'Lys-36' (H3.3K36me3). Interacts (via MYND-type zinc finger) with NCOR1. Interacts (via MYND-type zinc finger) with MGA protein (via PXLXP motif). Interacts (via MYND-type zinc finger) with EZH2. Interacts with EMSY and E2F6. Interacts with PIAS1 and UBE2I. As to quaternary structure, (Microbial infection) Interacts (via MYND-type zinc finger) with human adenovirus early E1A protein (via PXLXP motif); this interaction inhibits E1A mediated transactivation. (Microbial infection) Interacts (via MYND-type zinc finger) with Epstein-Barr virus EBNA2 protein (via PXLXP motif). Interacts with Epstein-Barr virus-derived protein LMP1; leading to negatively regulate NF-kappa-B activation by Epstein-Barr virus-derived protein LMP1. In terms of processing, sumoylated following its interaction with PIAS1 and UBE2I. Post-translationally, ubiquitinated, leading to proteasomal degradation. In terms of tissue distribution, ubiquitous.

It localises to the nucleus. Its subcellular location is the chromosome. Functionally, chromatin reader that specifically recognizes and binds histone H3.3 trimethylated at 'Lys-36' (H3.3K36me3) and regulates RNA polymerase II elongation. Does not bind other histone H3 subtypes (H3.1 or H3.2). Colocalizes with highly expressed genes and functions as a transcription corepressor by modulating RNA polymerase II at the elongation stage. Binds non-specifically to dsDNA. Acts as a tumor-suppressor by repressing a transcriptional program essential for tumor cell growth. In terms of biological role, (Microbial infection) Inhibits Epstein-Barr virus EBNA2-mediated transcriptional activation and host cell proliferation, through direct interaction. The chain is Zinc finger MYND domain-containing protein 11 from Homo sapiens (Human).